A 200-amino-acid chain; its full sequence is A-type ATP synthase subunit E (200 aa).

This sequence belongs to the V-ATPase E subunit family. In terms of assembly, has multiple subunits with at least A(3), B(3), C, D, E, F, H, I and proteolipid K(x).

It is found in the cell membrane. Component of the A-type ATP synthase that produces ATP from ADP in the presence of a proton gradient across the membrane. The protein is A-type ATP synthase subunit E of Methanopyrus kandleri (strain AV19 / DSM 6324 / JCM 9639 / NBRC 100938).